Reading from the N-terminus, the 174-residue chain is RNA pyrophosphohydrolase (174 aa).

Residues 6-149 form the Nudix hydrolase domain; the sequence is GFRANVGIII…KRDVYRKVMK (144 aa). Positions 38–59 match the Nudix box motif; that stretch reads GGVDDGETAEEAMYRELYEEVG.

Belongs to the Nudix hydrolase family. RppH subfamily. It depends on a divalent metal cation as a cofactor.

Accelerates the degradation of transcripts by removing pyrophosphate from the 5'-end of triphosphorylated RNA, leading to a more labile monophosphorylated state that can stimulate subsequent ribonuclease cleavage. In Shewanella baltica (strain OS223), this protein is RNA pyrophosphohydrolase.